Here is a 346-residue protein sequence, read N- to C-terminus: UDP-3-O-acylglucosamine N-acyltransferase (346 aa).

Residue His-240 is the Proton acceptor of the active site.

This sequence belongs to the transferase hexapeptide repeat family. LpxD subfamily. As to quaternary structure, homotrimer.

It carries out the reaction a UDP-3-O-[(3R)-3-hydroxyacyl]-alpha-D-glucosamine + a (3R)-hydroxyacyl-[ACP] = a UDP-2-N,3-O-bis[(3R)-3-hydroxyacyl]-alpha-D-glucosamine + holo-[ACP] + H(+). The protein operates within bacterial outer membrane biogenesis; LPS lipid A biosynthesis. Its function is as follows. Catalyzes the N-acylation of UDP-3-O-acylglucosamine using 3-hydroxyacyl-ACP as the acyl donor. Is involved in the biosynthesis of lipid A, a phosphorylated glycolipid that anchors the lipopolysaccharide to the outer membrane of the cell. This Bacteroides fragilis (strain ATCC 25285 / DSM 2151 / CCUG 4856 / JCM 11019 / LMG 10263 / NCTC 9343 / Onslow / VPI 2553 / EN-2) protein is UDP-3-O-acylglucosamine N-acyltransferase.